The following is a 446-amino-acid chain: Sensor-type histidine kinase PrrB (446 aa).

A run of 2 helical transmembrane segments spans residues 19-39 (VVATAIGAAIPVLIVGTVVWV) and 151-171 (LLICGFAIAAAAVFAWLLAAF). Residues 172 to 222 (AVRPFKQLAQQTRSVDAGGEAPRVEVHGATEAVEIAEAMRGMLQRIWNEQN) enclose the HAMP domain. In terms of domain architecture, Histidine kinase spans 237 to 446 (VSSHELRTPL…RLLLRISAPS (210 aa)). At H240 the chain carries Phosphohistidine; by autocatalysis.

Post-translationally, autophosphorylated.

The protein resides in the cell membrane. It carries out the reaction ATP + protein L-histidine = ADP + protein N-phospho-L-histidine.. Its function is as follows. Member of the two-component regulatory system PrrB/PrrA that is involved specifically in early intracellular multiplication of Mycobacterium and is essential for its viability. Functions as a sensor protein kinase which is autophosphorylated at a histidine residue and transfers its phosphate group to the conserved aspartic acid residue in the regulatory domain of PrrA. In turn, PrrA binds to the upstream promoter regions of target genes including itself to positively regulate their expression. This is Sensor-type histidine kinase PrrB (prrB) from Mycobacterium leprae (strain TN).